The chain runs to 317 residues: Olfactory receptor 5K16 (317 aa).

At 1-28 (MEKTNHSLTTQFILVGFSDHPDLKTPLF) the chain is on the extracellular side. The N-linked (GlcNAc...) asparagine glycan is linked to Asn-5. A helical membrane pass occupies residues 29–49 (LLFSVIYLVTMVGNLGLVAVI). The Cytoplasmic portion of the chain corresponds to 50–56 (YLEPRLH). The chain crosses the membrane as a helical span at residues 57–77 (TPMYIFLGNLALMDSCCSCAI). Over 78–93 (TPKILENFFSVDRRIS) the chain is Extracellular. A helical transmembrane segment spans residues 94–114 (LYECMAQFYFLCLAETADCFL). The cysteines at positions 97 and 189 are disulfide-linked. The Cytoplasmic segment spans residues 115–144 (LAAMAYDRYVAICNPLQYHSMMSKKLSIQM). Residues 145-165 (SIGTFITSNLHSLIHVGCLLR) traverse the membrane as a helical segment. At 166–198 (LTFCKSNRIDHFFCDILPLYRLSCTDPFINELM) the chain is on the extracellular side. The helical transmembrane segment at 199–219 (IYIFSMPIQVFTITTVLVSYF) threads the bilayer. At 220-239 (CILLTIFKMKSKDGRGKAFS) the chain is on the cytoplasmic side. Residues 240–259 (TCASHFFSVSIFYVCLLMYI) traverse the membrane as a helical segment. The Extracellular segment spans residues 260-268 (RPFDEGNKD). A helical transmembrane segment spans residues 269-289 (IPVAVFYTIIIPLLNPFIYSL). The Cytoplasmic portion of the chain corresponds to 290-317 (RNKEVVNAVKKVMKTHSIFKNASASMAR).

This sequence belongs to the G-protein coupled receptor 1 family.

It is found in the cell membrane. Its function is as follows. Potential odorant receptor. The protein is Olfactory receptor 5K16 of Mus musculus (Mouse).